The primary structure comprises 546 residues: Plastidic glucose transporter 4 (546 aa).

12 consecutive transmembrane segments (helical) span residues 105–125, 148–168, 182–202, 205–225, 240–260, 265–285, 345–365, 381–401, 410–430, 441–461, 477–497, and 503–523; these read VLPF…HLGV, WIVS…GALA, IPLA…TMIV, LLAG…ISEI, LFIC…AANP, TMFG…AFSP, VVSV…NAVV, VAAS…ASSL, LLLT…LSFT, LAVV…GPVP, AVAL…LYFL, and FGIS…VLYI.

It belongs to the major facilitator superfamily. Sugar transporter (TC 2.A.1.1) family.

Its subcellular location is the plastid. The protein localises to the chloroplast inner membrane. Functionally, may be involved in the efflux of glucose towards the cytosol. The chain is Plastidic glucose transporter 4 from Arabidopsis thaliana (Mouse-ear cress).